The sequence spans 115 residues: Phosphoribosyl-AMP cyclohydrolase (115 aa).

A Mg(2+)-binding site is contributed by aspartate 80. Residue cysteine 81 participates in Zn(2+) binding. 2 residues coordinate Mg(2+): aspartate 82 and aspartate 84. Residues cysteine 97 and cysteine 104 each coordinate Zn(2+).

Belongs to the PRA-CH family. In terms of assembly, homodimer. It depends on Mg(2+) as a cofactor. Requires Zn(2+) as cofactor.

The protein resides in the cytoplasm. The catalysed reaction is 1-(5-phospho-beta-D-ribosyl)-5'-AMP + H2O = 1-(5-phospho-beta-D-ribosyl)-5-[(5-phospho-beta-D-ribosylamino)methylideneamino]imidazole-4-carboxamide. Its pathway is amino-acid biosynthesis; L-histidine biosynthesis; L-histidine from 5-phospho-alpha-D-ribose 1-diphosphate: step 3/9. In terms of biological role, catalyzes the hydrolysis of the adenine ring of phosphoribosyl-AMP. In Mycolicibacterium gilvum (strain PYR-GCK) (Mycobacterium gilvum (strain PYR-GCK)), this protein is Phosphoribosyl-AMP cyclohydrolase.